A 490-amino-acid chain; its full sequence is GTPase Der (490 aa).

EngA-type G domains follow at residues 3–166 and 200–373; these read PVVA…AEAM and IKLA…DSAT. Residues 9–16, 56–60, 118–121, 206–213, 253–257, and 318–321 each bind GTP; these read GRPNVGKS, DTGGI, NKVD, GKPNVGKS, DTAGV, and NKWD. Residues 374-458 form the KH-like domain; it reads RRVSTSMLTR…PIQIRFQDGG (85 aa).

This sequence belongs to the TRAFAC class TrmE-Era-EngA-EngB-Septin-like GTPase superfamily. EngA (Der) GTPase family. Associates with the 50S ribosomal subunit.

In terms of biological role, GTPase that plays an essential role in the late steps of ribosome biogenesis. The protein is GTPase Der of Shewanella piezotolerans (strain WP3 / JCM 13877).